The sequence spans 349 residues: Rhodopsin (349 aa).

Residues 1-33 (TEGPYFYIPMSNATGVVRSPYEYPQYYLVYPAA) are Extracellular-facing. Asn-12 carries N-linked (GlcNAc...) asparagine glycosylation. Residues 34–58 (FAVLGAYMFFLIIFGFPVNFLTLYV) traverse the membrane as a helical segment. Topologically, residues 59 to 70 (TIEHKKLRTPLN) are cytoplasmic. A helical membrane pass occupies residues 71–93 (YILLNLAVADLFMVIGGFTTTIY). Residues 94 to 107 (TSMHGYFVLGRLGC) lie on the Extracellular side of the membrane. Cys-107 and Cys-184 form a disulfide bridge. Residues 108–130 (NLEGFSATLGGMISLWSLVVLAV) traverse the membrane as a helical segment. Positions 131 to 133 (ERW) match the 'Ionic lock' involved in activated form stabilization motif. Over 131 to 149 (ERWVVVCKPMSNFRFGENH) the chain is Cytoplasmic. Residues 150-170 (AIMGVTLTWAMGLACTVPPLV) traverse the membrane as a helical segment. The Extracellular segment spans residues 171 to 199 (GWSRYIPEGMQCSCGIDYYTRAEGFNNES). Asn-197 carries N-linked (GlcNAc...) asparagine glycosylation. Residues 200–221 (FVLYMFVCHFSFPLVVIFFCYG) traverse the membrane as a helical segment. Residues 222–249 (RLLCAVKEAAAAQQESETTQRAEREVTR) are Cytoplasmic-facing. A helical transmembrane segment spans residues 250 to 271 (MVILMVIGFLVCWLPYASVAWY). Topologically, residues 272–283 (IFTHQGSEFGPL) are extracellular. The chain crosses the membrane as a helical span at residues 284-305 (FMTIPAFFAKSSAIYNPVIYIC). Lys-293 carries the post-translational modification N6-(retinylidene)lysine. Topologically, residues 306 to 349 (LNKQFRQCMLTTLFCGKNPFEEEEGASSTKTEASSASSSSVSPA) are cytoplasmic. Cys-320 is lipidated: S-palmitoyl cysteine. The disordered stretch occupies residues 326–349 (EEEEGASSTKTEASSASSSSVSPA). The span at 331 to 349 (ASSTKTEASSASSSSVSPA) shows a compositional bias: low complexity.

This sequence belongs to the G-protein coupled receptor 1 family. Opsin subfamily. Post-translationally, phosphorylated on some or all of the serine and threonine residues present in the C-terminal region. In terms of processing, contains one covalently linked retinal chromophore.

Its subcellular location is the membrane. The protein localises to the cell projection. It is found in the cilium. It localises to the photoreceptor outer segment. Photoreceptor required for image-forming vision at low light intensity. While most salt water fish species use retinal as chromophore, most freshwater fish use 3-dehydroretinal, or a mixture of retinal and 3-dehydroretinal. Light-induced isomerization of 11-cis to all-trans retinal triggers a conformational change that activates signaling via G-proteins. Subsequent receptor phosphorylation mediates displacement of the bound G-protein alpha subunit by arrestin and terminates signaling. This is Rhodopsin (rho) from Myripristis berndti (Bigscale soldierfish).